The chain runs to 338 residues: Phenylalanine--tRNA ligase alpha subunit (338 aa).

Glutamate 253 provides a ligand contact to Mg(2+).

Belongs to the class-II aminoacyl-tRNA synthetase family. Phe-tRNA synthetase alpha subunit type 1 subfamily. In terms of assembly, tetramer of two alpha and two beta subunits. Mg(2+) is required as a cofactor.

It is found in the cytoplasm. The catalysed reaction is tRNA(Phe) + L-phenylalanine + ATP = L-phenylalanyl-tRNA(Phe) + AMP + diphosphate + H(+). In Syntrophotalea carbinolica (strain DSM 2380 / NBRC 103641 / GraBd1) (Pelobacter carbinolicus), this protein is Phenylalanine--tRNA ligase alpha subunit.